Here is a 450-residue protein sequence, read N- to C-terminus: Phosphoglucosamine mutase (450 aa).

Ser-104 acts as the Phosphoserine intermediate in catalysis. Ser-104, Asp-243, Asp-245, and Asp-247 together coordinate Mg(2+). Residue Ser-104 is modified to Phosphoserine.

Belongs to the phosphohexose mutase family. Mg(2+) serves as cofactor. In terms of processing, activated by phosphorylation.

It carries out the reaction alpha-D-glucosamine 1-phosphate = D-glucosamine 6-phosphate. In terms of biological role, catalyzes the conversion of glucosamine-6-phosphate to glucosamine-1-phosphate. The polypeptide is Phosphoglucosamine mutase (Cutibacterium acnes (strain DSM 16379 / KPA171202) (Propionibacterium acnes)).